Here is a 230-residue protein sequence, read N- to C-terminus: Orotidine 5'-phosphate decarboxylase (230 aa).

Substrate contacts are provided by residues D11, K34, D61–T70, T117, R179, Q188, G208, and R209. The Proton donor role is filled by K63.

It belongs to the OMP decarboxylase family. Type 1 subfamily. Homodimer.

It catalyses the reaction orotidine 5'-phosphate + H(+) = UMP + CO2. It participates in pyrimidine metabolism; UMP biosynthesis via de novo pathway; UMP from orotate: step 2/2. Catalyzes the decarboxylation of orotidine 5'-monophosphate (OMP) to uridine 5'-monophosphate (UMP). The chain is Orotidine 5'-phosphate decarboxylase from Streptococcus equi subsp. zooepidemicus (strain MGCS10565).